The chain runs to 178 residues: Protein GrpE (178 aa).

Residues 1–11 are compositionally biased toward pro residues; it reads MSENQNPPPSP. Positions 1–23 are disordered; that stretch reads MSENQNPPPSPEEIEAAMSANAA.

The protein belongs to the GrpE family. As to quaternary structure, homodimer.

Its subcellular location is the cytoplasm. In terms of biological role, participates actively in the response to hyperosmotic and heat shock by preventing the aggregation of stress-denatured proteins, in association with DnaK and GrpE. It is the nucleotide exchange factor for DnaK and may function as a thermosensor. Unfolded proteins bind initially to DnaJ; upon interaction with the DnaJ-bound protein, DnaK hydrolyzes its bound ATP, resulting in the formation of a stable complex. GrpE releases ADP from DnaK; ATP binding to DnaK triggers the release of the substrate protein, thus completing the reaction cycle. Several rounds of ATP-dependent interactions between DnaJ, DnaK and GrpE are required for fully efficient folding. This Acidovorax sp. (strain JS42) protein is Protein GrpE.